Reading from the N-terminus, the 241-residue chain is Large ribosomal subunit protein uL3 (241 aa).

Disordered regions lie at residues 139-164 (VSHR…KMPG) and 215-241 (DAPK…QEGA). An N5-methylglutamine modification is found at Gln151.

This sequence belongs to the universal ribosomal protein uL3 family. In terms of assembly, part of the 50S ribosomal subunit. Forms a cluster with proteins L14 and L19. Methylated by PrmB.

Its function is as follows. One of the primary rRNA binding proteins, it binds directly near the 3'-end of the 23S rRNA, where it nucleates assembly of the 50S subunit. The protein is Large ribosomal subunit protein uL3 of Rhodopseudomonas palustris (strain BisB5).